The sequence spans 374 residues: MSTIEPPMGLLAELTHRCPLQCPYCSNPLELERAGIELKTEEWLRIMDEAAELGVLQMHFSGGEPMVRKDLPELIARAVERQMYTNIITSGVLLDEAMMERLMKAGIDHIQLSFQDVDVENAERIGGLAGAQSKKLKAARLIKEAGLPLTLNYVIHRQNMENLPRMLEAAQAMGATRTEIANVQYYGWGLVNRDALLPSREQLEIATATVEEARERLKGVMVIDYVTPDYYAKRPKACMGGWARRFINISPSGKALPCHAAETLTGLEFPSVREWSLADIWSGAPAFQKYRGTDWMPEPCRSCDRREIDWGGCRCQAFALTGDMDITDPACALSPAHHVMEEAVSARGDVAPDYVYRRIGNAPVPNEVLSPVAE.

The Radical SAM core domain occupies 4–224 (IEPPMGLLAE…ERLKGVMVID (221 aa)). [4Fe-4S] cluster-binding residues include cysteine 18, cysteine 22, and cysteine 25.

It belongs to the radical SAM superfamily. PqqE family. In terms of assembly, interacts with PqqD. The interaction is necessary for activity of PqqE. The cofactor is [4Fe-4S] cluster.

It carries out the reaction [PQQ precursor protein] + S-adenosyl-L-methionine = E-Y cross-linked-[PQQ precursor protein] + 5'-deoxyadenosine + L-methionine + H(+). The protein operates within cofactor biosynthesis; pyrroloquinoline quinone biosynthesis. Its function is as follows. Catalyzes the cross-linking of a glutamate residue and a tyrosine residue in the PqqA protein as part of the biosynthesis of pyrroloquinoline quinone (PQQ). In Granulibacter bethesdensis (strain ATCC BAA-1260 / CGDNIH1), this protein is PqqA peptide cyclase.